The following is a 161-amino-acid chain: Large ribosomal subunit protein eL21 (161 aa).

The protein belongs to the eukaryotic ribosomal protein eL21 family.

The chain is Large ribosomal subunit protein eL21 (RPL21) from Cyanophora paradoxa.